Consider the following 715-residue polypeptide: Lactococcin-A transport/processing ATP-binding protein LcnC (715 aa).

The Peptidase C39 domain occupies 11–138; it reads QVDEMDCGCA…SEWTGISLFL (128 aa). Residue Cys17 is part of the active site. 6 helical membrane passes run 167-187, 197-217, 237-257, 282-302, 307-327, and 396-416; these read VILN…LGSY, IPNA…LTYI, LAID…MSFF, TILS…ILGL, LFLL…IFTP, and AIIQ…LVIS. Positions 168 to 450 constitute an ABC transmembrane type-1 domain; the sequence is ILNIVIASFI…IINLQTKLQK (283 aa). In terms of domain architecture, ABC transporter spans 482–715; it reads LNMSDISYQY…NGFYEQLYHN (234 aa). 515–522 is an ATP binding site; sequence GMSGSGKS.

The protein belongs to the ABC transporter superfamily. Bacteriocin (lactococcin) exporter (TC 3.A.1.112.3) family.

The protein localises to the cell membrane. Functionally, involved in the export process of the bacteriocin lactococcin A. This chain is Lactococcin-A transport/processing ATP-binding protein LcnC (lcnC), found in Lactococcus lactis subsp. lactis (Streptococcus lactis).